Here is an 85-residue protein sequence, read N- to C-terminus: Small ribosomal subunit protein bS16 (85 aa).

This sequence belongs to the bacterial ribosomal protein bS16 family.

The chain is Small ribosomal subunit protein bS16 from Nitrosomonas eutropha (strain DSM 101675 / C91 / Nm57).